A 255-amino-acid chain; its full sequence is Triosephosphate isomerase (255 aa).

9 to 11 (NWK) lines the substrate pocket. The active-site Electrophile is the H100. Catalysis depends on E169, which acts as the Proton acceptor. Residues G175, S208, and 229 to 230 (GG) each bind substrate.

This sequence belongs to the triosephosphate isomerase family. Homodimer.

It localises to the cytoplasm. The catalysed reaction is D-glyceraldehyde 3-phosphate = dihydroxyacetone phosphate. Its pathway is carbohydrate biosynthesis; gluconeogenesis. The protein operates within carbohydrate degradation; glycolysis; D-glyceraldehyde 3-phosphate from glycerone phosphate: step 1/1. In terms of biological role, involved in the gluconeogenesis. Catalyzes stereospecifically the conversion of dihydroxyacetone phosphate (DHAP) to D-glyceraldehyde-3-phosphate (G3P). The chain is Triosephosphate isomerase from Synechococcus sp. (strain JA-3-3Ab) (Cyanobacteria bacterium Yellowstone A-Prime).